Here is a 754-residue protein sequence, read N- to C-terminus: Phosphatidylinositol 4-phosphate 5-kinase 7 (754 aa).

MORN repeat units follow at residues 16–38 (YSGEVKGIIPNGKGKYAWSDGTI), 39–61 (YEGDWDEGKISGKGKLIWSSGAK), 62–84 (YEGDFSGGYLHGFGTMTSPDESV), 85–107 (YSGAWRMNVRHGLGRKEYCNSDL), 108–130 (YDGLWKEGLQDGRGSYSWTNGNR), 131–153 (YIGNWKKGKMCERGVMRWENGDL), 154–176 (YDGFWLNGFRHGSGVYKFADGCL), and 177–198 (YYGTWSRGLKDGKGVFYPAGTK). Positions 329 to 750 (GEHNYYLMLN…RFVNFLHKVF (422 aa)) constitute a PIPK domain. The activation loop stretch occupies residues 710 to 731 (YNTKKKVEHTCKSLQYDPMTIS).

It catalyses the reaction a 1,2-diacyl-sn-glycero-3-phospho-(1D-myo-inositol 4-phosphate) + ATP = a 1,2-diacyl-sn-glycero-3-phospho-(1D-myo-inositol-4,5-bisphosphate) + ADP + H(+). This Arabidopsis thaliana (Mouse-ear cress) protein is Phosphatidylinositol 4-phosphate 5-kinase 7 (PIP5K7).